Consider the following 1032-residue polypeptide: Phosphoenolpyruvate carboxylase 4 (1032 aa).

The active site involves His-154. The tract at residues 377 to 407 is disordered; the sequence is PNLQKQNEQDFSESDWEKIDNGSRSGLTSRG. A compositionally biased stretch (polar residues) spans 398–407; it reads GSRSGLTSRG. Lys-699 is an active-site residue.

The protein belongs to the PEPCase type 1 family. In terms of assembly, homotetramer. Requires Mg(2+) as cofactor. As to expression, expressed at low levels in flowers and siliques, and detectable in roots.

Its subcellular location is the cytoplasm. It catalyses the reaction oxaloacetate + phosphate = phosphoenolpyruvate + hydrogencarbonate. Through the carboxylation of phosphoenolpyruvate (PEP) it forms oxaloacetate, a four-carbon dicarboxylic acid source for the tricarboxylic acid cycle. The chain is Phosphoenolpyruvate carboxylase 4 (PPC4) from Arabidopsis thaliana (Mouse-ear cress).